Reading from the N-terminus, the 284-residue chain is Avenin-like b4 (284 aa).

An N-terminal signal peptide occupies residues 1–18 (MKVFILALLALTATTAIA).

Belongs to the prolamin family. In terms of processing, contains disulfide bonds.

Functionally, seed storage protein. Might be integrated via inter-chain disulfide bonds within the glutenin polymer. This Triticum aestivum (Wheat) protein is Avenin-like b4.